A 147-amino-acid chain; its full sequence is Cytochrome c-type biogenesis protein CcmE (147 aa).

Over 1 to 7 (MTVRQRR) the chain is Cytoplasmic. Residues 8–28 (FAMVILVVIGVSIATGLGLKA) traverse the membrane as a helical; Signal-anchor for type II membrane protein segment. The Periplasmic portion of the chain corresponds to 29–147 (FQENILFFYN…KTKANTEDKL (119 aa)). Residues H123 and Y127 each contribute to the heme site.

It belongs to the CcmE/CycJ family.

The protein localises to the cell inner membrane. In terms of biological role, heme chaperone required for the biogenesis of c-type cytochromes. Transiently binds heme delivered by CcmC and transfers the heme to apo-cytochromes in a process facilitated by CcmF and CcmH. The polypeptide is Cytochrome c-type biogenesis protein CcmE (Nitrosococcus oceani (strain ATCC 19707 / BCRC 17464 / JCM 30415 / NCIMB 11848 / C-107)).